The following is a 237-amino-acid chain: Dihydroceramide fatty acyl 2-hydroxylase FAH2 (237 aa).

2 consecutive transmembrane segments (helical) span residues 54 to 74 and 77 to 97; these read VWWA…SISA and GLTF…WTLL. The Zn(2+) site is built by histidine 102, histidine 107, histidine 123, histidine 126, and histidine 127. 2 helical membrane passes run 134-154 and 156-176; these read LRLV…WKLL and LLAT…GYVM. Zn(2+)-binding residues include histidine 181, histidine 185, histidine 201, histidine 204, and histidine 205.

Belongs to the sterol desaturase family. Interacts with CYTB5-A, CYTB5-B, CYTB5-C and CYTB5-D. It depends on Zn(2+) as a cofactor. As to expression, expressed in leaves, roots, flowers and seeds.

The protein localises to the endoplasmic reticulum membrane. It carries out the reaction an N-(1,2-saturated acyl)sphinganine + 2 Fe(II)-[cytochrome b5] + O2 + 2 H(+) = an N-[(2'R)-hydroxyacyl]sphinganine + 2 Fe(III)-[cytochrome b5] + H2O. Fatty acid 2-hydroxylase involved in the alpha-hydroxylation of the long-chain fatty acid (LCFA) palmitic acid. Probably involved in the resistance response to oxidative stress. The polypeptide is Dihydroceramide fatty acyl 2-hydroxylase FAH2 (Arabidopsis thaliana (Mouse-ear cress)).